A 602-amino-acid chain; its full sequence is UPF0329 protein ECU02_0060 (602 aa).

The segment covering 313–345 (EEDERKRAEAESARNREELLRMEEREKGKEKGS) has biased composition (basic and acidic residues). The tract at residues 313-407 (EEDERKRAEA…SPKEESKGEE (95 aa)) is disordered. Residues 346 to 356 (KGKGRKKRGKK) are compositionally biased toward basic residues. Basic and acidic residues predominate over residues 357–369 (GAGEAKEESKEED). Residues 370 to 384 (RGGEEEESVEADVPV) are compositionally biased toward acidic residues.

The protein belongs to the UPF0329 family.

The polypeptide is UPF0329 protein ECU02_0060 (Encephalitozoon cuniculi (strain GB-M1) (Microsporidian parasite)).